We begin with the raw amino-acid sequence, 189 residues long: UPF0398 protein lhv_1265 (189 aa).

The protein belongs to the UPF0398 family.

In Lactobacillus helveticus (strain DPC 4571), this protein is UPF0398 protein lhv_1265.